The following is a 248-amino-acid chain: Probable succinyl-CoA:3-ketoacid coenzyme A transferase subunit A (248 aa).

G24–G30 contacts CoA.

The protein belongs to the 3-oxoacid CoA-transferase subunit A family. Heterodimer of a subunit A and a subunit B.

The catalysed reaction is a 3-oxo acid + succinyl-CoA = a 3-oxoacyl-CoA + succinate. In Mycobacterium bovis (strain ATCC BAA-935 / AF2122/97), this protein is Probable succinyl-CoA:3-ketoacid coenzyme A transferase subunit A (scoA).